Here is a 518-residue protein sequence, read N- to C-terminus: Serine hydroxymethyltransferase, mitochondrial (518 aa).

A mitochondrion-targeting transit peptide spans 1 to 31 (MAMAMALRKLSSSVNKSSRPLFSASSLYYKS). Residue Lys-287 is modified to N6-(pyridoxal phosphate)lysine.

The protein belongs to the SHMT family. Homotetramer. It depends on pyridoxal 5'-phosphate as a cofactor.

Its subcellular location is the mitochondrion. The enzyme catalyses (6R)-5,10-methylene-5,6,7,8-tetrahydrofolate + glycine + H2O = (6S)-5,6,7,8-tetrahydrofolate + L-serine. The protein operates within one-carbon metabolism; tetrahydrofolate interconversion. In terms of biological role, catalyzes the interconversion of serine and glycine. This is Serine hydroxymethyltransferase, mitochondrial from Pisum sativum (Garden pea).